We begin with the raw amino-acid sequence, 331 residues long: NADH-quinone oxidoreductase subunit H (331 aa).

9 helical membrane passes run 6–26 (FFIVETIIKAVVILSVIATLA), 45–65 (GPWMVGPAGVLQIVADMIKLF), 78–98 (FIFLIAPIISASCAFVAMSVI), 120–140 (IGILFLLSVSGTCVYGTLIGG), 167–187 (GLSLIPVIMMVGSLSLIDIVH), 193–213 (ITSWFLIKQPVCFVLFTIAAF), 241–261 (MRWGMFFIGEYANMITYSIVI), 263–283 (LIFLGGFNSFWFIPGSLMIFL), and 311–331 (CWKICMPIALICIFVTAFVII).

Belongs to the complex I subunit 1 family. As to quaternary structure, NDH-1 is composed of 14 different subunits. Subunits NuoA, H, J, K, L, M, N constitute the membrane sector of the complex.

The protein localises to the cell inner membrane. It carries out the reaction a quinone + NADH + 5 H(+)(in) = a quinol + NAD(+) + 4 H(+)(out). NDH-1 shuttles electrons from NADH, via FMN and iron-sulfur (Fe-S) centers, to quinones in the respiratory chain. The immediate electron acceptor for the enzyme in this species is believed to be ubiquinone. Couples the redox reaction to proton translocation (for every two electrons transferred, four hydrogen ions are translocated across the cytoplasmic membrane), and thus conserves the redox energy in a proton gradient. This subunit may bind ubiquinone. This chain is NADH-quinone oxidoreductase subunit H, found in Campylobacter hominis (strain ATCC BAA-381 / DSM 21671 / CCUG 45161 / LMG 19568 / NCTC 13146 / CH001A).